The chain runs to 249 residues: Glucosamine-6-phosphate deaminase 2 (249 aa).

Catalysis depends on D67, which acts as the Proton acceptor; for enolization step. The active-site For ring-opening step is the N136. H138 serves as the catalytic Proton acceptor; for ring-opening step. E143 acts as the For ring-opening step in catalysis.

Belongs to the glucosamine/galactosamine-6-phosphate isomerase family. NagB subfamily.

The catalysed reaction is alpha-D-glucosamine 6-phosphate + H2O = beta-D-fructose 6-phosphate + NH4(+). It functions in the pathway amino-sugar metabolism; N-acetylneuraminate degradation; D-fructose 6-phosphate from N-acetylneuraminate: step 5/5. Catalyzes the reversible isomerization-deamination of glucosamine 6-phosphate (GlcN6P) to form fructose 6-phosphate (Fru6P) and ammonium ion. Required for growth on glucosamine and also provides the majority of GlcN6P deaminase activity during growth on N-acetylglucosamine (GlcNAc). The chain is Glucosamine-6-phosphate deaminase 2 from Bacillus subtilis (strain 168).